Reading from the N-terminus, the 329-residue chain is Ribosomal RNA small subunit methyltransferase H (329 aa).

Residues 44–46 (GGY), Asp-62, Asp-110, and Gln-117 each bind S-adenosyl-L-methionine. Positions 297-329 (APAELAANPRARSARLRSAERTSAPARRLGDAA) are disordered.

The protein belongs to the methyltransferase superfamily. RsmH family.

It is found in the cytoplasm. The catalysed reaction is cytidine(1402) in 16S rRNA + S-adenosyl-L-methionine = N(4)-methylcytidine(1402) in 16S rRNA + S-adenosyl-L-homocysteine + H(+). Functionally, specifically methylates the N4 position of cytidine in position 1402 (C1402) of 16S rRNA. In Rhodospirillum centenum (strain ATCC 51521 / SW), this protein is Ribosomal RNA small subunit methyltransferase H.